The following is a 551-amino-acid chain: ETS domain-containing transcription factor ERF (551 aa).

Residues T3 and T7 each carry the phosphothreonine modification. Phosphoserine is present on residues S20 and S24. Residues 27-107 constitute a DNA-binding region (ETS); the sequence is IQLWHFILEL…KGKRFTYKFN (81 aa). Disordered stretches follow at residues 130–169 and 184–304; these read QSAP…SSSS and GSVS…SHFS. A phosphoserine mark is found at S185 and S190. A compositionally biased stretch (pro residues) spans 239–250; that stretch reads RGGPEPLSPFPV. The span at 251 to 268 shows a compositional bias: low complexity; sequence SPLAGPGSLLPPQLSPAL. The segment covering 289 to 301 has biased composition (gly residues); sequence SGGGGPSGSGGGS. The residue at position 327 (S327) is a Phosphoserine. The tract at residues 342–476 is disordered; that stretch reads PQRPDKCPLP…KPEPGEAPGV (135 aa). The segment covering 348 to 361 has biased composition (pro residues); it reads CPLPPMAPETPPVP. A compositionally biased stretch (low complexity) spans 362 to 373; sequence SSASSSSSSSSS. The segment covering 404–413 has biased composition (gly residues); sequence GGSGSGGLAE. Phosphoserine is present on residues S433 and S437. Acidic residues predominate over residues 433-453; the sequence is SEGESEEVEVTDISDEDEEDG. Residue T443 is modified to Phosphothreonine. S446 is subject to Phosphoserine. Glycyl lysine isopeptide (Lys-Gly) (interchain with G-Cter in SUMO2) cross-links involve residues K467, K483, and K514. Residues 495–551 are disordered; sequence RLEGGGCLSGGPEDEGEDKKVRGDVGPGESGGPLTPRRVSSDLQHATAQLSLEHRDS. Position 529 is a phosphothreonine; by MAPK1 (T529). A phosphoserine mark is found at S534, S535, and S551. The span at 535–544 shows a compositional bias: polar residues; the sequence is SDLQHATAQL.

This sequence belongs to the ETS family. Phosphorylated by multiple kinases including MAPK1/ERK2 at THR-529. Phosphorylation regulates the activity of ERF. As to expression, expressed along the osteogenic margins of the developing calvarial bones, in a similar distribution to that observed for the master osteogenic regulator RUNX2.

Its subcellular location is the nucleus. Potent transcriptional repressor that binds to the H1 element of the Ets2 promoter. May regulate other genes involved in cellular proliferation. Required for extraembryonic ectoderm differentiation, ectoplacental cone cavity closure, and chorioallantoic attachment. May be important for regulating trophoblast stem cell differentiation. In Mus musculus (Mouse), this protein is ETS domain-containing transcription factor ERF (Erf).